We begin with the raw amino-acid sequence, 203 residues long: Glutathione S-transferase 2 (203 aa).

The GST N-terminal domain maps to 1–78 (MPKVVFHYFG…YLGRKYGLAG (78 aa)). Glutathione-binding positions include tyrosine 8, tryptophan 38, lysine 42, 48–50 (GQM), and 62–63 (QS). The GST C-terminal domain occupies 80-203 (DIEEDFEIDQ…YLDSAPKKEF (124 aa)).

Belongs to the GST superfamily. Sigma family. Homodimer.

It catalyses the reaction RX + glutathione = an S-substituted glutathione + a halide anion + H(+). Its function is as follows. Conjugation of reduced glutathione to a wide number of exogenous and endogenous hydrophobic electrophiles. The polypeptide is Glutathione S-transferase 2 (GST2) (Manduca sexta (Tobacco hawkmoth)).